Reading from the N-terminus, the 513-residue chain is ATP synthase subunit beta (513 aa).

Positions 1 to 29 (MATAPATEKKAPAKKAAAPKAAAPKKAAA) are disordered. Low complexity predominate over residues 14–29 (KKAAAPKAAAPKKAAA). 186-193 (GGAGVGKT) is an ATP binding site.

The protein belongs to the ATPase alpha/beta chains family. F-type ATPases have 2 components, CF(1) - the catalytic core - and CF(0) - the membrane proton channel. CF(1) has five subunits: alpha(3), beta(3), gamma(1), delta(1), epsilon(1). CF(0) has three main subunits: a(1), b(2) and c(9-12). The alpha and beta chains form an alternating ring which encloses part of the gamma chain. CF(1) is attached to CF(0) by a central stalk formed by the gamma and epsilon chains, while a peripheral stalk is formed by the delta and b chains.

The protein localises to the cell inner membrane. It catalyses the reaction ATP + H2O + 4 H(+)(in) = ADP + phosphate + 5 H(+)(out). In terms of biological role, produces ATP from ADP in the presence of a proton gradient across the membrane. The catalytic sites are hosted primarily by the beta subunits. This is ATP synthase subunit beta from Sphingopyxis alaskensis (strain DSM 13593 / LMG 18877 / RB2256) (Sphingomonas alaskensis).